Reading from the N-terminus, the 168-residue chain is MSQQPVAFLTRRETFSACHRLHSPQLSDAENLEVFGKCNNFHGHGHNYTVEITVRGPIDRRTGMVLNITELKEAIETVIMKRLDHKNLDKDVEYFANTPSTTENLAVYIWDNIRLQLKKPELLYEVKIHETPKNIISYRGPYPLNGIYNPINKRIAHDSCTNISSDSD.

His19 contributes to the Zn(2+) binding site. The active-site Proton acceptor is the Cys38. Positions 44 and 46 each coordinate Zn(2+). Active-site charge relay system residues include His85 and Glu130. Position 159 is a phosphoserine (Ser159). At Thr161 the chain carries Phosphothreonine. Residues Ser164, Ser165, and Ser167 each carry the phosphoserine modification.

The protein belongs to the PTPS family. In terms of assembly, homohexamer formed of two homotrimers in a head to head fashion. The cofactor is Zn(2+).

It catalyses the reaction 7,8-dihydroneopterin 3'-triphosphate = 6-pyruvoyl-5,6,7,8-tetrahydropterin + triphosphate + H(+). It functions in the pathway cofactor biosynthesis; tetrahydrobiopterin biosynthesis; tetrahydrobiopterin from 7,8-dihydroneopterin triphosphate: step 1/3. Functionally, required for pigment and biopterin synthesis. This is 6-pyruvoyl tetrahydrobiopterin synthase (pr) from Drosophila melanogaster (Fruit fly).